The chain runs to 264 residues: Phosphonoacetaldehyde hydrolase (264 aa).

The Nucleophile role is filled by D9. D9 and A11 together coordinate Mg(2+). K50 serves as the catalytic Schiff-base intermediate with substrate. Residue D183 coordinates Mg(2+).

It belongs to the HAD-like hydrolase superfamily. PhnX family. In terms of assembly, homodimer. It depends on Mg(2+) as a cofactor.

The catalysed reaction is phosphonoacetaldehyde + H2O = acetaldehyde + phosphate + H(+). Its function is as follows. Involved in phosphonate degradation. The protein is Phosphonoacetaldehyde hydrolase of Bacillus cereus (strain AH187).